Reading from the N-terminus, the 795-residue chain is Histone acetyltransferase KAT2A (795 aa).

The segment covering 1–18 (MADPAAQSSAQPRLQQAQ) has biased composition (polar residues). The interval 1 to 55 (MADPAAQSSAQPRLQQAQSSGPTGSNSNPGAGSSDPARPGLSQQQWSSQKKAQVR) is disordered. The segment covering 19 to 34 (SSGPTGSNSNPGAGSS) has biased composition (low complexity). Residues 461-614 (VIGNSLSQKS…GATLMECELN (154 aa)) enclose the N-acetyltransferase domain. E533 acts as the Proton donor/acceptor in catalysis. Acetyl-CoA contacts are provided by residues 537–539 (CAV), 544–550 (QVKGYGT), and Y575. Succinyl-CoA contacts are provided by residues 537-539 (CAV), 544-550 (QVKGYGT), and Y575. Positions 597–606 (LGYIKDYEGA) are loop 3. Residues 686–790 (KDPDLLYNML…KFFYFKLKEA (105 aa)) enclose the Bromo domain.

This sequence belongs to the acetyltransferase family. GCN5 subfamily.

The protein localises to the nucleus. The protein resides in the chromosome. Its subcellular location is the cytoplasm. It is found in the cytoskeleton. It localises to the microtubule organizing center. The protein localises to the centrosome. It carries out the reaction L-lysyl-[histone] + acetyl-CoA = N(6)-acetyl-L-lysyl-[histone] + CoA + H(+). The enzyme catalyses L-lysyl-[protein] + acetyl-CoA = N(6)-acetyl-L-lysyl-[protein] + CoA + H(+). The catalysed reaction is succinyl-CoA + L-lysyl-[protein] = N(6)-succinyl-L-lysyl-[protein] + CoA + H(+). It catalyses the reaction glutaryl-CoA + L-lysyl-[protein] = N(6)-glutaryl-L-lysyl-[protein] + CoA + H(+). In terms of biological role, protein lysine acyltransferase that can act as a acetyltransferase, glutaryltransferasesucc, succinyltransferase or malonyltransferase, depending on the context. Acts as a histone lysine succinyltransferase: catalyzes succinylation of histone H3 on 'Lys-79' (H3K79succ), with a maximum frequency around the transcription start sites of genes. Succinylation of histones gives a specific tag for epigenetic transcription activation. Association with the 2-oxoglutarate dehydrogenase complex, which provides succinyl-CoA, is required for histone succinylation. In different complexes, functions either as an acetyltransferase (HAT) or as a succinyltransferase: in the SAGA and ATAC complexes, acts as a histone acetyltransferase. Has significant histone acetyltransferase activity with core histones, but not with nucleosome core particles. Has a a strong preference for acetylation of H3 at 'Lys-9' (H3K9ac). Acetylation of histones gives a specific tag for epigenetic transcription activation. Also acetylates non-histone proteins, such as tbx5. Involved in heart and limb development by mediating acetylation of tbx5. Together with kat2b, required for growth and differentiation of craniofacial cartilage and bone by regulating acetylation of histone H3 at 'Lys-9' (H3K9ac). Also acts as a histone glutaryltransferase: catalyzes glutarylation of histone H4 on 'Lys-91' (H4K91glu), a mark that destabilizes nucleosomes by promoting dissociation of the H2A-H2B dimers from nucleosomes. This is Histone acetyltransferase KAT2A from Danio rerio (Zebrafish).